The chain runs to 370 residues: Queuine tRNA-ribosyltransferase (370 aa).

The active-site Proton acceptor is D93. Substrate contacts are provided by residues 93 to 97, D147, Q190, and G217; that span reads DSGGF. The segment at 248-254 is RNA binding; the sequence is GVGTPDY. The Nucleophile role is filled by D267. Residues 272–276 are RNA binding; important for wobble base 34 recognition; it reads TRVAR. Positions 305, 307, 310, and 336 each coordinate Zn(2+).

This sequence belongs to the queuine tRNA-ribosyltransferase family. In terms of assembly, homodimer. Within each dimer, one monomer is responsible for RNA recognition and catalysis, while the other monomer binds to the replacement base PreQ1. It depends on Zn(2+) as a cofactor.

It carries out the reaction 7-aminomethyl-7-carbaguanine + guanosine(34) in tRNA = 7-aminomethyl-7-carbaguanosine(34) in tRNA + guanine. Its pathway is tRNA modification; tRNA-queuosine biosynthesis. In terms of biological role, catalyzes the base-exchange of a guanine (G) residue with the queuine precursor 7-aminomethyl-7-deazaguanine (PreQ1) at position 34 (anticodon wobble position) in tRNAs with GU(N) anticodons (tRNA-Asp, -Asn, -His and -Tyr). Catalysis occurs through a double-displacement mechanism. The nucleophile active site attacks the C1' of nucleotide 34 to detach the guanine base from the RNA, forming a covalent enzyme-RNA intermediate. The proton acceptor active site deprotonates the incoming PreQ1, allowing a nucleophilic attack on the C1' of the ribose to form the product. After dissociation, two additional enzymatic reactions on the tRNA convert PreQ1 to queuine (Q), resulting in the hypermodified nucleoside queuosine (7-(((4,5-cis-dihydroxy-2-cyclopenten-1-yl)amino)methyl)-7-deazaguanosine). This Natranaerobius thermophilus (strain ATCC BAA-1301 / DSM 18059 / JW/NM-WN-LF) protein is Queuine tRNA-ribosyltransferase.